We begin with the raw amino-acid sequence, 490 residues long: Acetyl-coenzyme A carboxylase carboxyl transferase subunit beta, chloroplastic (490 aa).

Residues 184-203 (LNSSENEGSSRRTRTKGSDL) are disordered. In terms of domain architecture, CoA carboxyltransferase N-terminal spans 221 to 490 (LWVQCENCYG…PLNQKSSKIK (270 aa)). Residues cysteine 225, cysteine 228, cysteine 244, and cysteine 247 each coordinate Zn(2+). A C4-type zinc finger spans residues 225–247 (CENCYGLNYKKFLKSKMNICEQC).

This sequence belongs to the AccD/PCCB family. As to quaternary structure, acetyl-CoA carboxylase is a heterohexamer composed of biotin carboxyl carrier protein, biotin carboxylase and 2 subunits each of ACCase subunit alpha and ACCase plastid-coded subunit beta (accD). The cofactor is Zn(2+). RNA expressed in leaf, root, stem, and tuber; the least expression occurs in stems. RNA persists even in senescent leaves.

Its subcellular location is the plastid. It is found in the chloroplast stroma. It catalyses the reaction N(6)-carboxybiotinyl-L-lysyl-[protein] + acetyl-CoA = N(6)-biotinyl-L-lysyl-[protein] + malonyl-CoA. Its pathway is lipid metabolism; malonyl-CoA biosynthesis; malonyl-CoA from acetyl-CoA: step 1/1. In terms of biological role, component of the acetyl coenzyme A carboxylase (ACC) complex. Biotin carboxylase (BC) catalyzes the carboxylation of biotin on its carrier protein (BCCP) and then the CO(2) group is transferred by the transcarboxylase to acetyl-CoA to form malonyl-CoA. This Solanum tuberosum (Potato) protein is Acetyl-coenzyme A carboxylase carboxyl transferase subunit beta, chloroplastic.